A 291-amino-acid polypeptide reads, in one-letter code: Oxidative stress-responsive serine-rich protein 1 (291 aa).

The disordered stretch occupies residues Glu-48–Ala-174. The span at Ser-65 to Lys-83 shows a compositional bias: basic residues. Residues Glu-132 to Thr-142 show a composition bias toward polar residues. Phosphothreonine occurs at positions 142 and 232.

The polypeptide is Oxidative stress-responsive serine-rich protein 1 (OSER1) (Bos taurus (Bovine)).